A 261-amino-acid chain; its full sequence is tRNA pseudouridine synthase A (261 aa).

Asp-51 functions as the Nucleophile in the catalytic mechanism. Tyr-109 is a substrate binding site.

This sequence belongs to the tRNA pseudouridine synthase TruA family. Homodimer.

It catalyses the reaction uridine(38/39/40) in tRNA = pseudouridine(38/39/40) in tRNA. Functionally, formation of pseudouridine at positions 38, 39 and 40 in the anticodon stem and loop of transfer RNAs. The protein is tRNA pseudouridine synthase A of Shewanella pealeana (strain ATCC 700345 / ANG-SQ1).